The primary structure comprises 137 residues: BolA-like protein 1 (137 aa).

Phosphoserine is present on serine 81. Residues 115-137 are disordered; that stretch reads RENPQLDISPPCLGGSKKTRGTS.

The protein belongs to the BolA/IbaG family. As to quaternary structure, interacts with GLRX5.

The protein localises to the mitochondrion. Functionally, acts as a mitochondrial iron-sulfur (Fe-S) cluster assembly factor that facilitates (Fe-S) cluster insertion into a subset of mitochondrial proteins. Probably acts together with the monothiol glutaredoxin GLRX5. May protect cells against oxidative stress. The protein is BolA-like protein 1 (Bola1) of Mus musculus (Mouse).